The following is a 596-amino-acid chain: Actin-related protein 9 (596 aa).

Positions 148–178 (LASPAETSPDKGDASASEAVPDVTDSKDTSE) are disordered.

Belongs to the actin family. ARP8 subfamily.

The chain is Actin-related protein 9 (ARP9) from Arabidopsis thaliana (Mouse-ear cress).